The chain runs to 190 residues: NADH dehydrogenase [ubiquinone] iron-sulfur protein 3 (190 aa).

Belongs to the complex I 30 kDa subunit family. As to quaternary structure, complex I is composed of about 45 different subunits. This is a component of the iron-sulfur (IP) fragment of the enzyme.

The protein localises to the mitochondrion inner membrane. It catalyses the reaction a ubiquinone + NADH + 5 H(+)(in) = a ubiquinol + NAD(+) + 4 H(+)(out). In terms of biological role, core subunit of the mitochondrial membrane respiratory chain NADH dehydrogenase (Complex I) that is believed to belong to the minimal assembly required for catalysis. Complex I functions in the transfer of electrons from NADH to the respiratory chain. The immediate electron acceptor for the enzyme is believed to be ubiquinone. This chain is NADH dehydrogenase [ubiquinone] iron-sulfur protein 3 (NAD9), found in Solanum tuberosum (Potato).